A 189-amino-acid chain; its full sequence is Large ribosomal subunit protein uL6 (189 aa).

This sequence belongs to the universal ribosomal protein uL6 family. Part of the 50S ribosomal subunit.

Its function is as follows. This protein binds to the 23S rRNA, and is important in its secondary structure. It is located near the subunit interface in the base of the L7/L12 stalk, and near the tRNA binding site of the peptidyltransferase center. The protein is Large ribosomal subunit protein uL6 of Phocaeicola vulgatus (strain ATCC 8482 / DSM 1447 / JCM 5826 / CCUG 4940 / NBRC 14291 / NCTC 11154) (Bacteroides vulgatus).